Consider the following 271-residue polypeptide: Very long chain fatty acid elongase 3 (271 aa).

Asn6 carries N-linked (GlcNAc...) asparagine glycosylation. A run of 7 helical transmembrane segments spans residues 30 to 50 (FLEE…LLIV), 67 to 87 (PLIL…LRMW), 116 to 136 (FWSF…AFII), 141 to 161 (PLIF…SFGY), 165 to 187 (VPSG…TYYT), 199 to 219 (LPMV…IFGI), and 236 to 256 (HFFW…HFFH).

It belongs to the ELO family. ELOVL3 subfamily. In terms of assembly, interacts with TECR. N-Glycosylated. In terms of tissue distribution, expressed in brown adipose tissue and liver. In the skin, strong expressed in the cells of the inner layer of the outer root sheath of the hair follicles and in the sebocytes of the sebaceous glands. Hardly detectable in the epidermis and not at all in fibroblasts.

It is found in the endoplasmic reticulum membrane. The enzyme catalyses a very-long-chain acyl-CoA + malonyl-CoA + H(+) = a very-long-chain 3-oxoacyl-CoA + CO2 + CoA. The catalysed reaction is eicosanoyl-CoA + malonyl-CoA + H(+) = 3-oxodocosanoyl-CoA + CO2 + CoA. It carries out the reaction hexadecanoyl-CoA + malonyl-CoA + H(+) = 3-oxooctadecanoyl-CoA + CO2 + CoA. It catalyses the reaction octadecanoyl-CoA + malonyl-CoA + H(+) = 3-oxoeicosanoyl-CoA + CO2 + CoA. The enzyme catalyses (9Z)-octadecenoyl-CoA + malonyl-CoA + H(+) = 3-oxo-(11Z)-eicosenoyl-CoA + CO2 + CoA. The catalysed reaction is (9Z,12Z)-octadecadienoyl-CoA + malonyl-CoA + H(+) = (11Z,14Z)-3-oxoicosa-11,14-dienoyl-CoA + CO2 + CoA. It carries out the reaction (9Z,12Z,15Z)-octadecatrienoyl-CoA + malonyl-CoA + H(+) = (11Z,14Z,17Z)-3-oxoeicosatrienoyl-CoA + CO2 + CoA. It catalyses the reaction docosanoyl-CoA + malonyl-CoA + H(+) = 3-oxotetracosanoyl-CoA + CO2 + CoA. The enzyme catalyses tetradecanoyl-CoA + malonyl-CoA + H(+) = 3-oxohexadecanoyl-CoA + CO2 + CoA. Its pathway is lipid metabolism; polyunsaturated fatty acid biosynthesis. Functionally, catalyzes the first and rate-limiting reaction of the four reactions that constitute the long-chain fatty acids elongation cycle. This endoplasmic reticulum-bound enzymatic process allows the addition of 2 carbons to the chain of long- and very long-chain fatty acids (VLCFAs) per cycle. Condensing enzyme that exhibits activity toward saturated and unsaturated acyl-CoA substrates with higher activity toward C18 acyl-CoAs, especially C18:0 acyl-CoAs. May participate in the production of saturated and monounsaturated VLCFAs of different chain lengths that are involved in multiple biological processes as precursors of membrane lipids and lipid mediators. Participates in the formation of certain VLCFA and triglycerides in certain cells of the hair follicles and the sebaceous glands, required for skin barrier function. Critical enzyme for lipid accumulation and metabolic activity in brown adipocytes during the early phase of the tissue recruitment. Plays a role in lipid storage and in resistance to diet-induced obesity. The chain is Very long chain fatty acid elongase 3 from Mus musculus (Mouse).